Here is a 249-residue protein sequence, read N- to C-terminus: Tumor necrosis factor ligand superfamily member 12 (249 aa).

Topologically, residues 1-21 (MAARRSQRRRGRRGEPGTALL) are cytoplasmic. The chain crosses the membrane as a helical; Signal-anchor for type II membrane protein span at residues 22-42 (VPLALGLGLALACLGLLLAVV). The Extracellular portion of the chain corresponds to 43–249 (SLGSRASLSA…LTYFGLFQVH (207 aa)). The tract at residues 55–85 (PAQEELVAEEDQDPSELNPQTEESQDPAPFL) is disordered. Residues 56–68 (AQEELVAEEDQDP) are compositionally biased toward acidic residues. In terms of domain architecture, THD spans 107–248 (IAAHYEVHPR…FLTYFGLFQV (142 aa)). Asn139 carries an N-linked (GlcNAc...) asparagine glycan. Cys191 and Cys210 are disulfide-bonded.

The protein belongs to the tumor necrosis factor family. As to quaternary structure, homotrimer. Interacts with the angiogenic factor AGGF1/VG5Q. In terms of processing, the soluble form derives from the membrane form by proteolytic processing. In terms of tissue distribution, highly expressed in adult heart, pancreas, skeletal muscle, brain, colon, small intestine, lung, ovary, prostate, spleen, lymph node, appendix and peripheral blood lymphocytes. Low expression in kidney, testis, liver, placenta, thymus and bone marrow. Also detected in fetal kidney, liver, lung and brain.

Its subcellular location is the cell membrane. The protein localises to the secreted. Functionally, binds to FN14 and possibly also to TNRFSF12/APO3. Weak inducer of apoptosis in some cell types. Mediates NF-kappa-B activation. Promotes angiogenesis and the proliferation of endothelial cells. Also involved in induction of inflammatory cytokines. Promotes IL8 secretion. The chain is Tumor necrosis factor ligand superfamily member 12 (TNFSF12) from Homo sapiens (Human).